A 155-amino-acid chain; its full sequence is 6,7-dimethyl-8-ribityllumazine synthase (155 aa).

5-amino-6-(D-ribitylamino)uracil is bound by residues F23, 57 to 59 (AFE), and 81 to 83 (AVI). A (2S)-2-hydroxy-3-oxobutyl phosphate-binding site is contributed by 86 to 87 (ST). Catalysis depends on H89, which acts as the Proton donor. Residue F114 participates in 5-amino-6-(D-ribitylamino)uracil binding. Position 128 (R128) interacts with (2S)-2-hydroxy-3-oxobutyl phosphate.

Belongs to the DMRL synthase family.

It catalyses the reaction (2S)-2-hydroxy-3-oxobutyl phosphate + 5-amino-6-(D-ribitylamino)uracil = 6,7-dimethyl-8-(1-D-ribityl)lumazine + phosphate + 2 H2O + H(+). It functions in the pathway cofactor biosynthesis; riboflavin biosynthesis; riboflavin from 2-hydroxy-3-oxobutyl phosphate and 5-amino-6-(D-ribitylamino)uracil: step 1/2. In terms of biological role, catalyzes the formation of 6,7-dimethyl-8-ribityllumazine by condensation of 5-amino-6-(D-ribitylamino)uracil with 3,4-dihydroxy-2-butanone 4-phosphate. This is the penultimate step in the biosynthesis of riboflavin. The chain is 6,7-dimethyl-8-ribityllumazine synthase from Geobacter metallireducens (strain ATCC 53774 / DSM 7210 / GS-15).